The chain runs to 345 residues: MENTLGLEIIEVVEQAAIASAKWMGKGEKNTADQVAVEAMRERMNKIYMRGRIVIGEGERDDAPMLYIGEEVGICTQPNADQLCNPDELVEIDIAVDPCEGTNLVAYGQPGSMAVLAISEKGGLFAAPDFYMKKLAAPPAAKGKVDINKSATENLKILSECLDRAIDELVVVVMKRDRHQGLIKEIRDAGARVQLISDGDVGAAISCGFAGTNIHALMGIGAAPEGVISAAAMRALGGHFQGQLIYDPEVVKTGLIGESKEANLERLSSMGINDPDKVYDAHELASGETVLFAACGITSGNLMQGVRFFHGGARTQSLVISSQSQTARFVDTIHMAGQPKTVQLH.

Residues Asp33, Glu57, Asp97, and Glu100 each contribute to the Mn(2+) site. Residues 100–102, Tyr131, 176–178, and 198–200 contribute to the substrate site; these read EGT, RDR, and DGD. Glu225 provides a ligand contact to Mn(2+).

Belongs to the FBPase class 2 family. Homotetramer. Mn(2+) is required as a cofactor.

The enzyme catalyses beta-D-fructose 1,6-bisphosphate + H2O = beta-D-fructose 6-phosphate + phosphate. It catalyses the reaction D-sedoheptulose 1,7-bisphosphate + H2O = D-sedoheptulose 7-phosphate + phosphate. Its pathway is carbohydrate biosynthesis; Calvin cycle. Functionally, catalyzes the hydrolysis of fructose 1,6-bisphosphate (Fru 1,6-P2) and sedoheptulose 1,7-bisphosphate (Sed 1,7-P2) to fructose 6-phosphate and sedoheptulose 7-phosphate, respectively. In Trichormus variabilis (strain ATCC 29413 / PCC 7937) (Anabaena variabilis), this protein is D-fructose 1,6-bisphosphatase class 2/sedoheptulose 1,7-bisphosphatase.